The following is a 329-amino-acid chain: Synaptonemal complex central element protein 1 (329 aa).

Positions methionine 1–tyrosine 29 are disordered. Coiled-coil stretches lie at residues arginine 54–leucine 167 and lysine 194–histidine 294. The tract at residues isoleucine 291–threonine 329 is disordered. The segment covering valine 312–threonine 329 has biased composition (basic and acidic residues).

The protein belongs to the SYCE family. Homodimer. Found in a complex with SYCP1 and SYCE2. Interacts with SYCP1, SYCE2 and SYCE3. Interacts with SIX6OS1. In terms of tissue distribution, meiotic cells (at protein level). Expressed in the ovary and testis.

It localises to the nucleus. Its subcellular location is the chromosome. Functionally, major component of the transverse central element of synaptonemal complexes (SCS), formed between homologous chromosomes during meiotic prophase. Requires SYCP1 in order to be incorporated into the central element. May have a role in the synaptonemal complex assembly, stabilization and recombination. The polypeptide is Synaptonemal complex central element protein 1 (Syce1) (Mus musculus (Mouse)).